Consider the following 762-residue polypeptide: Protein PHTF1 (762 aa).

Residues 6 to 150 (RDAISWYQKK…VHCQIVSTQI (145 aa)) form the PHTF domain. The next 3 membrane-spanning stretches (helical) occupy residues 77 to 97 (GLVR…VTSL), 99 to 119 (IFVW…LYLM), and 121 to 141 (PIVS…MGTV). The tract at residues 152-184 (RPSGNNGNRRRRKLRKTVNGDGTRDNGNNSPDK) is disordered. Residues Asn-179 and Asn-224 are each glycosylated (N-linked (GlcNAc...) asparagine). Phosphoserine is present on residues Ser-272, Ser-276, Ser-277, Ser-334, and Ser-336. Positions 345-415 (AAFSQGSRSG…NTLHSGTKRD (71 aa)) are disordered. Residues 348–364 (SQGSRSGMSGGSRSLNL) are compositionally biased toward low complexity. Asn-363 is a glycosylation site (N-linked (GlcNAc...) asparagine). Basic and acidic residues predominate over residues 365–376 (SRRDSESTRHDS). N-linked (GlcNAc...) asparagine glycosylation is present at Asn-431. 4 helical membrane passes run 473 to 493 (GVGY…FPFL), 515 to 535 (TLFC…INFF), 611 to 631 (VVVS…CAQV), and 645 to 665 (WEFL…ASLG). Asn-674 and Asn-733 each carry an N-linked (GlcNAc...) asparagine glycan. The helical transmembrane segment at 737 to 757 (VVILSAVSGVISDLLGFNIRL) threads the bilayer.

As to quaternary structure, interacts with FEM1B. In terms of tissue distribution, highly expressed in testis.

It localises to the endoplasmic reticulum membrane. Its subcellular location is the golgi apparatus. The protein localises to the cis-Golgi network membrane. In Rattus norvegicus (Rat), this protein is Protein PHTF1.